Reading from the N-terminus, the 366-residue chain is Putative F-box protein At3g13624 (366 aa).

The region spanning 1-51 (MTTISDLPEDVVEEILPRVPLTSLSAVRSICKTWNTLSKNRVLCKAAVKKQ) is the F-box domain.

This is Putative F-box protein At3g13624 from Arabidopsis thaliana (Mouse-ear cress).